A 259-amino-acid polypeptide reads, in one-letter code: tRNA (guanine-N(7)-)-methyltransferase (259 aa).

The interval 1-36 (MTFPSHNPPETGHPSAAPDEALPAAEAPVPGDPEAR) is disordered. Residues 14–29 (PSAAPDEALPAAEAPV) are compositionally biased toward low complexity. Residues Glu-91, Glu-116, Asp-143, and Asp-166 each coordinate S-adenosyl-L-methionine. Residue Asp-166 is part of the active site. Residues Lys-170, Asp-202, and 237–240 (TKFE) contribute to the substrate site.

The protein belongs to the class I-like SAM-binding methyltransferase superfamily. TrmB family.

The enzyme catalyses guanosine(46) in tRNA + S-adenosyl-L-methionine = N(7)-methylguanosine(46) in tRNA + S-adenosyl-L-homocysteine. The protein operates within tRNA modification; N(7)-methylguanine-tRNA biosynthesis. Functionally, catalyzes the formation of N(7)-methylguanine at position 46 (m7G46) in tRNA. The chain is tRNA (guanine-N(7)-)-methyltransferase from Aromatoleum aromaticum (strain DSM 19018 / LMG 30748 / EbN1) (Azoarcus sp. (strain EbN1)).